The chain runs to 130 residues: Ribonuclease VapC22 (130 aa).

The 116-residue stretch at 4 to 119 folds into the PINc domain; the sequence is VLLDSHVAYW…RLVTKDRRLR (116 aa). Mg(2+)-binding residues include D7 and D97.

It belongs to the PINc/VapC protein family. Requires Mg(2+) as cofactor.

It is found in the secreted. Functionally, toxic component of a type II toxin-antitoxin (TA) system. An RNase. Upon expression in M.smegmatis inhibits translation and colony formation. Its toxic effect on colony formation is neutralized by coexpression with cognate antitoxin VapB22; the effect on translation has not been tested but is probably neutralized also. The polypeptide is Ribonuclease VapC22 (Mycobacterium tuberculosis (strain ATCC 25618 / H37Rv)).